The chain runs to 228 residues: N-(5'-phosphoribosyl)anthranilate isomerase (228 aa).

Belongs to the TrpF family.

It carries out the reaction N-(5-phospho-beta-D-ribosyl)anthranilate = 1-(2-carboxyphenylamino)-1-deoxy-D-ribulose 5-phosphate. It functions in the pathway amino-acid biosynthesis; L-tryptophan biosynthesis; L-tryptophan from chorismate: step 3/5. This chain is N-(5'-phosphoribosyl)anthranilate isomerase, found in Azorhizobium caulinodans (strain ATCC 43989 / DSM 5975 / JCM 20966 / LMG 6465 / NBRC 14845 / NCIMB 13405 / ORS 571).